The chain runs to 369 residues: UDP-N-acetylglucosamine--N-acetylmuramyl-(pentapeptide) pyrophosphoryl-undecaprenol N-acetylglucosamine transferase (369 aa).

Residues 16-18, Asn-130, Arg-171, Ser-196, and Gln-297 contribute to the UDP-N-acetyl-alpha-D-glucosamine site; that span reads TGG.

This sequence belongs to the glycosyltransferase 28 family. MurG subfamily.

The protein resides in the cell inner membrane. It carries out the reaction di-trans,octa-cis-undecaprenyl diphospho-N-acetyl-alpha-D-muramoyl-L-alanyl-D-glutamyl-meso-2,6-diaminopimeloyl-D-alanyl-D-alanine + UDP-N-acetyl-alpha-D-glucosamine = di-trans,octa-cis-undecaprenyl diphospho-[N-acetyl-alpha-D-glucosaminyl-(1-&gt;4)]-N-acetyl-alpha-D-muramoyl-L-alanyl-D-glutamyl-meso-2,6-diaminopimeloyl-D-alanyl-D-alanine + UDP + H(+). The protein operates within cell wall biogenesis; peptidoglycan biosynthesis. Functionally, cell wall formation. Catalyzes the transfer of a GlcNAc subunit on undecaprenyl-pyrophosphoryl-MurNAc-pentapeptide (lipid intermediate I) to form undecaprenyl-pyrophosphoryl-MurNAc-(pentapeptide)GlcNAc (lipid intermediate II). The protein is UDP-N-acetylglucosamine--N-acetylmuramyl-(pentapeptide) pyrophosphoryl-undecaprenol N-acetylglucosamine transferase of Desulfotalea psychrophila (strain LSv54 / DSM 12343).